The chain runs to 420 residues: Vacuolar amino acid transporter 5 (420 aa).

Residues 1–19 are Cytoplasmic-facing; that stretch reads MSGYSPLSSGPADVHIGKA. The helical transmembrane segment at 20–40 threads the bilayer; the sequence is GFFSSVINLANTILGAGILSL. Residues 41–49 are Vacuolar-facing; that stretch reads PNAFTKTGL. Residues 50 to 70 form a helical membrane-spanning segment; that stretch reads LFGCLTIVFSAFASFLGLYFV. The Cytoplasmic portion of the chain corresponds to 71-96; sequence SQCAARLPRGKASFAAVAKHTFPSLA. A helical transmembrane segment spans residues 97–117; it reads VVFDASIAVKCFGVAVSYLVI. The Vacuolar portion of the chain corresponds to 118–141; that stretch reads VGDLMPQIAPSLGLSSPMFLRRQT. Residues 142-162 traverse the membrane as a helical segment; the sequence is WIVFALFVLTPLSFLKRLDSL. Over 163–166 the chain is Cytoplasmic; sequence RHTS. Residues 167–187 form a helical membrane-spanning segment; it reads VISLIALCYLVFIVLYHFIIG. Over 188 to 195 the chain is Vacuolar; it reads DTVKGEIR. A helical transmembrane segment spans residues 196–216; the sequence is YFVPESGFGYLSVLPVFVFGF. Topologically, residues 217–240 are cytoplasmic; it reads TCHQNAFSVINEVRNFSQGFVNFT. A helical transmembrane segment spans residues 241 to 261; sequence MFTAIISSTLLYLLVAITGYL. Residues 262–278 lie on the Vacuolar side of the membrane; that stretch reads SFGSLASGNIIAMYDNT. The chain crosses the membrane as a helical span at residues 279–299; that stretch reads SIWIIGGKLAIVVLVLFSYPL. At 300-326 the chain is on the cytoplasmic side; it reads QCHPCRNSVYQAIRRSYSAHDMSDGYH. Residues 327 to 347 traverse the membrane as a helical segment; sequence AVITLCILLFTHSLALLLSSL. Over 348 to 349 the chain is Vacuolar; that stretch reads EM. The chain crosses the membrane as a helical span at residues 350–370; sequence VLAFVGSTGSTFISFILPGSL. Topologically, residues 371-394 are cytoplasmic; the sequence is YYFFSHKVASPGNSSPLQLRISRA. A helical transmembrane segment spans residues 395–415; sequence FAAGLAIYGTVVMILCLNINI. At 416–420 the chain is on the vacuolar side; the sequence is AKLSH.

It belongs to the amino acid/polyamine transporter 2 family.

It localises to the vacuole membrane. Its function is as follows. Vacuolar amino acid transporter involved in the vacuolar uptake of histidine, glutamate, tyrosine, arginine, lysine, and serine. Required for sporulation. The chain is Vacuolar amino acid transporter 5 (avt5) from Schizosaccharomyces pombe (strain 972 / ATCC 24843) (Fission yeast).